The chain runs to 143 residues: Transcription antitermination protein NusB (143 aa).

It belongs to the NusB family.

Functionally, involved in transcription antitermination. Required for transcription of ribosomal RNA (rRNA) genes. Binds specifically to the boxA antiterminator sequence of the ribosomal RNA (rrn) operons. The chain is Transcription antitermination protein NusB from Desulforamulus reducens (strain ATCC BAA-1160 / DSM 100696 / MI-1) (Desulfotomaculum reducens).